A 365-amino-acid polypeptide reads, in one-letter code: Caffeic acid 3-O-methyltransferase 1 (365 aa).

130–136 (MNQDKVL) lines the substrate pocket. Residues 162–180 (AFEYHGTDPRFNKVFNKGM) are substrate binding. Residues G208, D231, D251, M252, and K265 each contribute to the S-adenosyl-L-methionine site. H269 serves as the catalytic Proton acceptor.

This sequence belongs to the class I-like SAM-binding methyltransferase superfamily. Cation-independent O-methyltransferase family. COMT subfamily. As to quaternary structure, homodimer. In terms of processing, the N-terminus is blocked. As to expression, xylem.

The enzyme catalyses (E)-caffeate + S-adenosyl-L-methionine = (E)-ferulate + S-adenosyl-L-homocysteine + H(+). It functions in the pathway aromatic compound metabolism; phenylpropanoid biosynthesis. Its function is as follows. Catalyzes the conversion of caffeic acid to ferulic acid and of 5-hydroxyferulic acid to sinapic acid. The resulting products may subsequently be converted to the corresponding alcohols that are incorporated into lignins. In Populus tremuloides (Quaking aspen), this protein is Caffeic acid 3-O-methyltransferase 1 (OMT1).